A 610-amino-acid polypeptide reads, in one-letter code: UvrABC system protein C (610 aa).

One can recognise a GIY-YIG domain in the interval 16–94 (SQPGVYSMYD…IKLYQPRYNV (79 aa)). Residues 204-239 (QQVLNQLVERMELASRALNFEDAAHARDQIQAVRRV) form the UVR domain.

It belongs to the UvrC family. Interacts with UvrB in an incision complex.

The protein resides in the cytoplasm. In terms of biological role, the UvrABC repair system catalyzes the recognition and processing of DNA lesions. UvrC both incises the 5' and 3' sides of the lesion. The N-terminal half is responsible for the 3' incision and the C-terminal half is responsible for the 5' incision. The chain is UvrABC system protein C from Sodalis glossinidius (strain morsitans).